The primary structure comprises 179 residues: Bifunctional protein PyrR (179 aa).

Positions 99–111 match the PRPP-binding motif; that stretch reads VILVDDVLYTGRT.

Belongs to the purine/pyrimidine phosphoribosyltransferase family. PyrR subfamily. As to quaternary structure, homodimer and homohexamer; in equilibrium.

The enzyme catalyses UMP + diphosphate = 5-phospho-alpha-D-ribose 1-diphosphate + uracil. Regulates transcriptional attenuation of the pyrimidine nucleotide (pyr) operon by binding in a uridine-dependent manner to specific sites on pyr mRNA. This disrupts an antiterminator hairpin in the RNA and favors formation of a downstream transcription terminator, leading to a reduced expression of downstream genes. Functionally, also displays a weak uracil phosphoribosyltransferase activity which is not physiologically significant. The protein is Bifunctional protein PyrR of Brevibacillus brevis (strain 47 / JCM 6285 / NBRC 100599).